The following is a 371-amino-acid chain: Cathepsin L1 (371 aa).

The signal sequence occupies residues 1 to 48; the sequence is MNHLGVFETRFRPRTRHKSQRAQLIPEQITMRTAVLLPLLALLAVAQA. The propeptide at 49 to 153 is activation peptide; it reads VSFADVVMEE…VTFISPAHVT (105 aa). N-linked (GlcNAc...) asparagine glycosylation occurs at Asn-127. 3 disulfide bridges follow: Cys-175/Cys-218, Cys-209/Cys-251, and Cys-310/Cys-360. The active site involves Cys-178. The active site involves His-317. Residues 327-329 constitute a propeptide that is removed on maturation; that stretch reads DES. Asn-338 is an active-site residue.

Belongs to the peptidase C1 family. In terms of assembly, dimer of a heavy and a light chain linked by disulfide bonds. In terms of tissue distribution, in the embryo, predominantly expressed in the midgut. Also expressed in larval alimentary organs such as salivary gland and midgut including gastric caeca.

The protein resides in the lysosome. It catalyses the reaction Specificity close to that of papain. As compared to cathepsin B, cathepsin L exhibits higher activity toward protein substrates, but has little activity on Z-Arg-Arg-NHMec, and no peptidyl-dipeptidase activity.. Its function is as follows. Important for the overall degradation of proteins in lysosomes. Essential for adult male and female fertility. May play a role in digestion. The protein is Cathepsin L1 of Drosophila melanogaster (Fruit fly).